Reading from the N-terminus, the 635-residue chain is Threonine--tRNA ligase (635 aa).

In terms of domain architecture, TGS spans 1 to 61 (MINISLSDGS…ENNCKLRILT (61 aa)). The catalytic stretch occupies residues 242–533 (DHRKLGRELD…LIEEYAGCFP (292 aa)). Zn(2+)-binding residues include Cys333, His384, and His510.

The protein belongs to the class-II aminoacyl-tRNA synthetase family. As to quaternary structure, homodimer. Zn(2+) serves as cofactor.

It localises to the cytoplasm. The enzyme catalyses tRNA(Thr) + L-threonine + ATP = L-threonyl-tRNA(Thr) + AMP + diphosphate + H(+). In terms of biological role, catalyzes the attachment of threonine to tRNA(Thr) in a two-step reaction: L-threonine is first activated by ATP to form Thr-AMP and then transferred to the acceptor end of tRNA(Thr). Also edits incorrectly charged L-seryl-tRNA(Thr). The sequence is that of Threonine--tRNA ligase from Rickettsia canadensis (strain McKiel).